The chain runs to 1895 residues: Diacylglycerol kinase eta (1895 aa).

Residues 1 to 10 show a composition bias toward basic and acidic residues; that stretch reads MAHLKLDTLH. The interval 1–37 is disordered; sequence MAHLKLDTLHVQRSPRGSRRSSPSSGRSSACSSGSIS. The segment covering 20–37 has biased composition (low complexity); it reads RSSPSSGRSSACSSGSIS. The 94-residue stretch at 82 to 175 folds into the PH domain; the sequence is AIIKEGFLLK…WLGSLKTATA (94 aa). Phorbol-ester/DAG-type zinc fingers lie at residues 195 to 245 and 267 to 318; these read HHHW…IANC and PHQW…AVAC. A DAGKc domain is found at 349 to 485; the sequence is GNFSPLLVFV…DRWSIMVFEK (137 aa). 4 disordered regions span residues 781–801, 1012–1053, 1113–1137, and 1172–1191; these read ANID…ENTP, TTLC…MARL, QHRG…GANL, and PNTI…HGQD. Residues 1113–1128 are compositionally biased toward basic and acidic residues; the sequence is QHRGGDNDSDYPEHEQ. The span at 1172–1184 shows a compositional bias: polar residues; the sequence is PNTILTTSTSPTK. Residues 1832 to 1895 form the SAM domain; the sequence is WSVNEVVTWL…LQAIKDLSEN (64 aa).

The protein belongs to the eukaryotic diacylglycerol kinase family.

It localises to the cytoplasm. The enzyme catalyses a 1,2-diacyl-sn-glycerol + ATP = a 1,2-diacyl-sn-glycero-3-phosphate + ADP + H(+). Its function is as follows. Phosphorylates diacylglycerol (DAG) to generate phosphatidic acid (PA). In Drosophila melanogaster (Fruit fly), this protein is Diacylglycerol kinase eta.